We begin with the raw amino-acid sequence, 740 residues long: DNA ligase (740 aa).

The segment at 1–20 (MGPGLTLSGMTEQSSLFPAP) is disordered. NAD(+)-binding positions include 56-60 (DAEYD), 105-106 (SI), and Glu-142. The N6-AMP-lysine intermediate role is filled by Lys-144. Positions 165, 201, 322, and 346 each coordinate NAD(+). Positions 471, 474, 489, and 495 each coordinate Zn(2+). Positions 654-740 (AATLPLAGMT…RGAPPNAGGG (87 aa)) constitute a BRCT domain.

The protein belongs to the NAD-dependent DNA ligase family. LigA subfamily. Mg(2+) is required as a cofactor. Requires Mn(2+) as cofactor.

The enzyme catalyses NAD(+) + (deoxyribonucleotide)n-3'-hydroxyl + 5'-phospho-(deoxyribonucleotide)m = (deoxyribonucleotide)n+m + AMP + beta-nicotinamide D-nucleotide.. Its function is as follows. DNA ligase that catalyzes the formation of phosphodiester linkages between 5'-phosphoryl and 3'-hydroxyl groups in double-stranded DNA using NAD as a coenzyme and as the energy source for the reaction. It is essential for DNA replication and repair of damaged DNA. In Acidovorax ebreus (strain TPSY) (Diaphorobacter sp. (strain TPSY)), this protein is DNA ligase.